The sequence spans 185 residues: TATA-box-binding protein (185 aa).

A run of 2 repeats spans residues 8-84 and 99-175.

It belongs to the TBP family.

In terms of biological role, general factor that plays a role in the activation of archaeal genes transcribed by RNA polymerase. Binds specifically to the TATA box promoter element which lies close to the position of transcription initiation. The sequence is that of TATA-box-binding protein from Thermococcus sibiricus (strain DSM 12597 / MM 739).